The following is a 157-amino-acid chain: 2-C-methyl-D-erythritol 2,4-cyclodiphosphate synthase (157 aa).

A divalent metal cation is bound by residues Asp8 and His10. Residues 8–10 and 34–35 contribute to the 4-CDP-2-C-methyl-D-erythritol 2-phosphate site; these read DVH and HS. His42 contributes to the a divalent metal cation binding site. 4-CDP-2-C-methyl-D-erythritol 2-phosphate is bound by residues 56–58, 132–135, and Arg142; these read DIG and TTNE.

The protein belongs to the IspF family. In terms of assembly, homotrimer. Requires a divalent metal cation as cofactor.

The enzyme catalyses 4-CDP-2-C-methyl-D-erythritol 2-phosphate = 2-C-methyl-D-erythritol 2,4-cyclic diphosphate + CMP. It functions in the pathway isoprenoid biosynthesis; isopentenyl diphosphate biosynthesis via DXP pathway; isopentenyl diphosphate from 1-deoxy-D-xylulose 5-phosphate: step 4/6. Its function is as follows. Involved in the biosynthesis of isopentenyl diphosphate (IPP) and dimethylallyl diphosphate (DMAPP), two major building blocks of isoprenoid compounds. Catalyzes the conversion of 4-diphosphocytidyl-2-C-methyl-D-erythritol 2-phosphate (CDP-ME2P) to 2-C-methyl-D-erythritol 2,4-cyclodiphosphate (ME-CPP) with a corresponding release of cytidine 5-monophosphate (CMP). The sequence is that of 2-C-methyl-D-erythritol 2,4-cyclodiphosphate synthase from Prosthecochloris aestuarii (strain DSM 271 / SK 413).